The sequence spans 152 residues: Sorting nexin-3 (152 aa).

The PX domain occupies 30–147; that stretch reads NFLEIEVRSP…CAFIQDPQWD (118 aa). A 1,2-diacyl-sn-glycero-3-phospho-(1D-myo-inositol-3-phosphate)-binding residues include Arg73, Ser75, Lys99, Arg104, and Arg113.

The protein belongs to the sorting nexin family.

The protein localises to the cytoplasm. The protein resides in the golgi apparatus membrane. It localises to the prevacuolar compartment membrane. Its function is as follows. Required for retention of late Golgi membrane proteins. Component of the retrieval machinery that functions by direct interaction with the cytosolic tails of certain TGN membrane proteins during the sorting/budding process at the prevacuolar compartment. Binds phosphatidylinositol 3-phosphate (PtdIns(P3)). In Yarrowia lipolytica (strain CLIB 122 / E 150) (Yeast), this protein is Sorting nexin-3 (SNX3).